We begin with the raw amino-acid sequence, 266 residues long: Indole-3-glycerol phosphate synthase (266 aa).

Belongs to the TrpC family.

The catalysed reaction is 1-(2-carboxyphenylamino)-1-deoxy-D-ribulose 5-phosphate + H(+) = (1S,2R)-1-C-(indol-3-yl)glycerol 3-phosphate + CO2 + H2O. Its pathway is amino-acid biosynthesis; L-tryptophan biosynthesis; L-tryptophan from chorismate: step 4/5. The sequence is that of Indole-3-glycerol phosphate synthase from Opitutus terrae (strain DSM 11246 / JCM 15787 / PB90-1).